Reading from the N-terminus, the 257-residue chain is Cytochrome c oxidase subunit 3 (257 aa).

A run of 6 helical transmembrane segments spans residues 13–33, 36–56, 80–100, 154–174, 195–215, and 237–257; these read PWPI…VSYF, LSMY…FQWW, GMIL…WAFF, YISA…FTMF, FFMT…FLLV, and AWYW…MYWW.

It belongs to the cytochrome c oxidase subunit 3 family. In terms of assembly, component of the cytochrome c oxidase (complex IV, CIV), a multisubunit enzyme composed of a catalytic core of 3 subunits and several supernumerary subunits. The complex exists as a monomer or a dimer and forms supercomplexes (SCs) in the inner mitochondrial membrane with ubiquinol-cytochrome c oxidoreductase (cytochrome b-c1 complex, complex III, CIII).

Its subcellular location is the mitochondrion inner membrane. The catalysed reaction is 4 Fe(II)-[cytochrome c] + O2 + 8 H(+)(in) = 4 Fe(III)-[cytochrome c] + 2 H2O + 4 H(+)(out). Functionally, component of the cytochrome c oxidase, the last enzyme in the mitochondrial electron transport chain which drives oxidative phosphorylation. The respiratory chain contains 3 multisubunit complexes succinate dehydrogenase (complex II, CII), ubiquinol-cytochrome c oxidoreductase (cytochrome b-c1 complex, complex III, CIII) and cytochrome c oxidase (complex IV, CIV), that cooperate to transfer electrons derived from NADH and succinate to molecular oxygen, creating an electrochemical gradient over the inner membrane that drives transmembrane transport and the ATP synthase. Cytochrome c oxidase is the component of the respiratory chain that catalyzes the reduction of oxygen to water. Electrons originating from reduced cytochrome c in the intermembrane space (IMS) are transferred via the dinuclear copper A center (CU(A)) of subunit 2 and heme A of subunit 1 to the active site in subunit 1, a binuclear center (BNC) formed by heme A3 and copper B (CU(B)). The BNC reduces molecular oxygen to 2 water molecules using 4 electrons from cytochrome c in the IMS and 4 protons from the mitochondrial matrix. The chain is Cytochrome c oxidase subunit 3 (COIII) from Rhipicephalus sanguineus (Brown dog tick).